We begin with the raw amino-acid sequence, 179 residues long: Probable WRKY transcription factor 24 (179 aa).

The segment at residues 92–157 (SDDDVLDDGY…YEGVHNHPCE (66 aa)) is a DNA-binding region (WRKY).

Belongs to the WRKY group II-c family.

It is found in the nucleus. Transcription factor. Interacts specifically with the W box (5'-(T)TGAC[CT]-3'), a frequently occurring elicitor-responsive cis-acting element. This chain is Probable WRKY transcription factor 24 (WRKY24), found in Arabidopsis thaliana (Mouse-ear cress).